A 374-amino-acid polypeptide reads, in one-letter code: Muconate cycloisomerase 1 (374 aa).

Belongs to the cycloisomerase 2 family. Homotetramer.

The catalysed reaction is (S)-muconolactone = cis,cis-muconate + H(+). It functions in the pathway aromatic compound metabolism; beta-ketoadipate pathway; 5-oxo-4,5-dihydro-2-furylacetate from catechol: step 2/3. Its function is as follows. Catalyzes a syn cycloisomerization. The protein is Muconate cycloisomerase 1 of Cutaneotrichosporon cutaneum (Yeast).